The following is a 418-amino-acid chain: FK506-binding protein 3 (418 aa).

3 disordered regions span residues 49–133 (PSTL…DDEF), 172–273 (SLTG…ETKK), and 289–309 (LEEGPTKKEEKKEEKKEKPKT). The segment covering 61-89 (YDDEDDAGGLLGDYDEDELDISEEEEEEE) has biased composition (acidic residues). Residues 93–103 (KSKKGKGKGKS) are compositionally biased toward basic residues. 2 stretches are compositionally biased toward acidic residues: residues 108-133 (EEEEEEEEDEDEGDEELIEIDTDDEF) and 186-224 (GYDDEDDDEEDDESYDEDEDDYLTPDEEADLEELEDASD). The span at 225-239 (VEAKIQELVEKEQSK) shows a compositional bias: basic and acidic residues. Positions 251 to 264 (PEEEEEEEEEEEEE) are enriched in acidic residues. One can recognise a PPIase FKBP-type domain in the interval 332-418 (GSKVGMRYIG…TFDVKLVSLK (87 aa)).

This sequence belongs to the FKBP-type PPIase family. FKBP3/4 subfamily.

Its subcellular location is the nucleus. It localises to the nucleolus. It catalyses the reaction [protein]-peptidylproline (omega=180) = [protein]-peptidylproline (omega=0). Its activity is regulated as follows. Inhibited by both FK506 and rapamycin. PPIases accelerate the folding of proteins. It catalyzes the cis-trans isomerization of proline imidic peptide bonds in oligopeptides. The polypeptide is FK506-binding protein 3 (FPR3) (Kluyveromyces lactis (strain ATCC 8585 / CBS 2359 / DSM 70799 / NBRC 1267 / NRRL Y-1140 / WM37) (Yeast)).